Here is a 430-residue protein sequence, read N- to C-terminus: Trigger factor (430 aa).

The PPIase FKBP-type domain maps to 163–248 (GNIAIIDFKG…IKDIKVKELP (86 aa)).

It belongs to the FKBP-type PPIase family. Tig subfamily.

Its subcellular location is the cytoplasm. It catalyses the reaction [protein]-peptidylproline (omega=180) = [protein]-peptidylproline (omega=0). Functionally, involved in protein export. Acts as a chaperone by maintaining the newly synthesized protein in an open conformation. Functions as a peptidyl-prolyl cis-trans isomerase. The polypeptide is Trigger factor (Clostridium botulinum (strain Loch Maree / Type A3)).